Here is a 206-residue protein sequence, read N- to C-terminus: Protein GrpE (206 aa).

Residues 1-18 (MNNEDKKLQDEQLQKETV) are compositionally biased toward basic and acidic residues. The segment at 1-21 (MNNEDKKLQDEQLQKETVEAA) is disordered.

This sequence belongs to the GrpE family. As to quaternary structure, homodimer.

The protein localises to the cytoplasm. In terms of biological role, participates actively in the response to hyperosmotic and heat shock by preventing the aggregation of stress-denatured proteins, in association with DnaK and GrpE. It is the nucleotide exchange factor for DnaK and may function as a thermosensor. Unfolded proteins bind initially to DnaJ; upon interaction with the DnaJ-bound protein, DnaK hydrolyzes its bound ATP, resulting in the formation of a stable complex. GrpE releases ADP from DnaK; ATP binding to DnaK triggers the release of the substrate protein, thus completing the reaction cycle. Several rounds of ATP-dependent interactions between DnaJ, DnaK and GrpE are required for fully efficient folding. The polypeptide is Protein GrpE (Photobacterium profundum (strain SS9)).